The sequence spans 348 residues: Enkurin domain-containing protein 1 (348 aa).

Disordered regions lie at residues 1–65, 84–195, and 262–282; these read MCEG…RPGG, GGIS…PSAK, and AEAR…TRMP. Position 93 is a phosphoserine (S93). Residues 95–127 are compositionally biased toward basic and acidic residues; it reads KRKDPKDHEKENMRRIREIQRRFREQEHSREQG. Residue S138 is modified to Phosphoserine. The segment covering 139 to 148 has biased composition (basic and acidic residues); sequence PKYDKVESRV. The Enkurin domain maps to 253 to 345; that stretch reads ERRDLWRREA…IFSRPKVFVK (93 aa).

Interacts with alpha-tubulin. Interacts (via central region) with CCP110 (via N-terminal region); competes with CEP97 for binding to CCP110.

The protein resides in the cytoplasm. Its subcellular location is the cytoskeleton. It is found in the microtubule organizing center. The protein localises to the centrosome. It localises to the centriole. The protein resides in the cilium basal body. Its subcellular location is the cell projection. It is found in the cilium. The protein localises to the spindle. It localises to the spindle pole. The protein resides in the cilium axoneme. Microtubule-binding protein which regulates microtubule organization and stability. Promotes the stability of astral microtubules and facilitates the proper orientation of the mitotic spindle. This allows the oriented division of basal keratinocytes and contributes to epidermal stratification. Required for the assembly of both primary and motile cilia. Destabilizes the interaction between CCP110 and CEP97 by competing with CEP97 for binding to CCP110 which promotes the removal of CCP110 and CEP97 from the mother centriole and allows the initiation of ciliogenesis. This Bos taurus (Bovine) protein is Enkurin domain-containing protein 1 (ENKD1).